We begin with the raw amino-acid sequence, 867 residues long: Heat shock 70 kDa protein 17 (867 aa).

The N-terminal stretch at 1 to 24 (MGKIFSWLVVLLSLISLVPVPSES) is a signal peptide. Polar residues-rich tracts occupy residues 560 to 575 (TIDSNTTTSTGNATDE) and 587 to 598 (DAENSTASNTTA). 2 disordered regions span residues 560–607 (TIDS…ASLG) and 829–867 (PKPKPKIEKVTKTENTTKEEEQSKSSDEAAKEEESHDEL). Residues 833 to 867 (PKIEKVTKTENTTKEEEQSKSSDEAAKEEESHDEL) are compositionally biased toward basic and acidic residues. A Prevents secretion from ER motif is present at residues 865-867 (DEL).

It belongs to the heat shock protein 70 (TC 1.A.33) family. HSP110/SSE subfamily.

The protein localises to the endoplasmic reticulum lumen. The chain is Heat shock 70 kDa protein 17 (HSP70-17) from Arabidopsis thaliana (Mouse-ear cress).